A 239-amino-acid polypeptide reads, in one-letter code: Fatty acid metabolism regulator protein (239 aa).

The HTH gntR-type domain maps to 6-74 (QSPAGFAEEY…HGKPTQVNNF (69 aa)). The H-T-H motif DNA-binding region spans 34–53 (ERELSELIGVTRTTLREVLQ).

Homodimer.

Its subcellular location is the cytoplasm. Multifunctional regulator of fatty acid metabolism. This Edwardsiella ictaluri (strain 93-146) protein is Fatty acid metabolism regulator protein.